The following is a 1373-amino-acid chain: DNA-directed RNA polymerase subunit beta (1373 aa).

It belongs to the RNA polymerase beta chain family. In terms of assembly, the RNAP catalytic core consists of 2 alpha, 1 beta, 1 beta' and 1 omega subunit. When a sigma factor is associated with the core the holoenzyme is formed, which can initiate transcription.

It carries out the reaction RNA(n) + a ribonucleoside 5'-triphosphate = RNA(n+1) + diphosphate. Its function is as follows. DNA-dependent RNA polymerase catalyzes the transcription of DNA into RNA using the four ribonucleoside triphosphates as substrates. The chain is DNA-directed RNA polymerase subunit beta from Rickettsia rickettsii (strain Iowa).